We begin with the raw amino-acid sequence, 220 residues long: ATP-dependent dethiobiotin synthetase BioD (220 aa).

11 to 16 (GVGKTF) is an ATP binding site. Thr15 contributes to the Mg(2+) binding site. Lys36 is an active-site residue. Thr40 contacts substrate. ATP contacts are provided by residues Asp48 and 107–110 (EGAG). Mg(2+) is bound by residues Asp48 and Glu107.

Belongs to the dethiobiotin synthetase family. As to quaternary structure, homodimer. The cofactor is Mg(2+).

It is found in the cytoplasm. The catalysed reaction is (7R,8S)-7,8-diammoniononanoate + CO2 + ATP = (4R,5S)-dethiobiotin + ADP + phosphate + 3 H(+). Its pathway is cofactor biosynthesis; biotin biosynthesis; biotin from 7,8-diaminononanoate: step 1/2. Catalyzes a mechanistically unusual reaction, the ATP-dependent insertion of CO2 between the N7 and N8 nitrogen atoms of 7,8-diaminopelargonic acid (DAPA, also called 7,8-diammoniononanoate) to form a ureido ring. This chain is ATP-dependent dethiobiotin synthetase BioD, found in Aquifex aeolicus (strain VF5).